A 481-amino-acid polypeptide reads, in one-letter code: Subtilisin-like protease 1 (481 aa).

The first 19 residues, 1 to 19, serve as a signal peptide directing secretion; sequence MGVFRFISISLAAVSAANA. A propeptide spanning residues 20 to 116 is cleaved from the precursor; that stretch reads AQILSMPHAQ…VEPDTIISVH (97 aa). An Inhibitor I9 domain is found at 34–115; sequence SYIVMMKDDT…FVEPDTIISV (82 aa). In terms of domain architecture, Peptidase S8 spans 126 to 400; that stretch reads SWGLARISSS…NVLINNGGAK (275 aa). Residues aspartate 158 and histidine 190 each act as charge relay system in the active site. Residues 175–198 form a disordered region; it reads GSNQVNDGDDNDRSGHGTHTSGTM. The N-linked (GlcNAc...) asparagine glycan is linked to asparagine 251. The segment at 281-312 is disordered; the sequence is GNDNTDARSSSPASEPSVCTVGASAEDDSRSS. Over residues 282 to 294 the composition is skewed to polar residues; sequence NDNTDARSSSPAS. Serine 345 serves as the catalytic Charge relay system. The disordered stretch occupies residues 379–455; the sequence is ASISDVGPGT…HPHTPFPGGD (77 aa). Over residues 424 to 450 the composition is skewed to pro residues; sequence PQQPAPGEPSTPAPAPMPPTPQHPHTP.

Belongs to the peptidase S8 family.

It localises to the secreted. Secreted subtilisin-like serine protease with keratinolytic activity that contributes to pathogenicity. The chain is Subtilisin-like protease 1 (SUB1) from Arthroderma gypseum (strain ATCC MYA-4604 / CBS 118893) (Microsporum gypseum).